The sequence spans 406 residues: Membrane protein UL43 homolog (406 aa).

10 consecutive transmembrane segments (helical) span residues 48–68, 71–91, 103–123, 126–146, 162–182, 188–208, 266–286, 299–319, 339–359, and 386–406; these read LFLVGLQASVITSGLILQYHV, AAVNATIMGLIVVSGLWPTSV, CLQTVVVLGFAVLWAVGCPIS, LPFVELLGISISAITGTVAAV, IYFYVMMLGTGLGGLLTVILY, YEVLIGLCISIVTLVSIVDAA, SVIPPVLYIVTPLMWAISHII, LAVSIGGHIIAFGLQGFAVLY, IAVTFAGISWGAIIILTSTVA, and VYHVCVYIIINLCYLCGTYVS.

It belongs to the alphaherpesvirinae HHV-1 UL43 family.

The protein localises to the membrane. In Varicella-zoster virus (strain Dumas) (HHV-3), this protein is Membrane protein UL43 homolog.